Reading from the N-terminus, the 151-residue chain is Small ribosomal subunit protein uS13 (151 aa).

The protein belongs to the universal ribosomal protein uS13 family. In terms of assembly, part of the 30S ribosomal subunit. Forms a loose heterodimer with protein S19. Forms two bridges to the 50S subunit in the 70S ribosome.

Functionally, located at the top of the head of the 30S subunit, it contacts several helices of the 16S rRNA. In the 70S ribosome it contacts the 23S rRNA (bridge B1a) and protein L5 of the 50S subunit (bridge B1b), connecting the 2 subunits; these bridges are implicated in subunit movement. This Hyperthermus butylicus (strain DSM 5456 / JCM 9403 / PLM1-5) protein is Small ribosomal subunit protein uS13.